The following is a 535-amino-acid chain: Putative cysteine ligase BshC (535 aa).

Positions Asp-420–Asn-477 form a coiled coil.

This sequence belongs to the BshC family.

Its function is as follows. Involved in bacillithiol (BSH) biosynthesis. May catalyze the last step of the pathway, the addition of cysteine to glucosamine malate (GlcN-Mal) to generate BSH. The protein is Putative cysteine ligase BshC of Carboxydothermus hydrogenoformans (strain ATCC BAA-161 / DSM 6008 / Z-2901).